An 863-amino-acid polypeptide reads, in one-letter code: Dipeptidyl peptidase 9 (863 aa).

Residues 1–20 (MATTGTPTADRGDAAATDDP) are disordered. Ala2 carries the post-translational modification N-acetylalanine. Catalysis depends on charge relay system residues Ser730, Asp808, and His840. Ser730 serves as a coordination point for Val-boroPro.

Belongs to the peptidase S9B family. DPPIV subfamily. In terms of assembly, homodimer. Forms a ternary complex with NLRP1, composed of a DPP9 homodimer, one full-length NLRP1 protein, and one cleaved C-terminus of NLRP1 (NACHT, LRR and PYD domains-containing protein 1, C-terminus). Forms a ternary complex with CARD8, composed of a DPP9 homodimer, one full-length NLRP1 protein, and one cleaved C-terminus of CARD8 (Caspase recruitment domain-containing protein 8, C-terminus). In the ternary complex, only one subunit of the DPP9 homodimer is bound to NLRP1 or CARD8. In terms of tissue distribution, ubiquitously expressed, with highest levels in liver, heart and muscle, and lowest levels in brain.

Its subcellular location is the cytoplasm. The protein localises to the cytosol. The protein resides in the nucleus. The enzyme catalyses Release of an N-terminal dipeptide, Xaa-Yaa-|-Zaa-, from a polypeptide, preferentially when Yaa is Pro, provided Zaa is neither Pro nor hydroxyproline.. Its activity is regulated as follows. Inhibited by the serine proteinase inhibitor 4-(2-aminoethyl)benzenesulphonyl fluoride (AEBSF), and by di-isopropylfluorophosphate. Inhibited by Val-boroPro (Talabostat, PT-100), a non-selective inhibitor, which triggers pyroptosis in monocytes and macrophages. Val-boroPro inhibits activity by binding to the active site, mimicking a substrate-bound state, thereby displacing the C-terminal fragment of NLRP1, leading to activation of the NLRP1 inflammasome. In contrast, Val-boroPro does not directly displaces CARD8: it acts by promoting degradation of the N-terminal part of CARD8, leading to indirect disruption of the ternary complex. Chemical inhibition of DPP9 by Val-boroPro in HIV-1-infected cells activates the CARD8 inflammasome, triggering cell death, offering a promising strategy for the elimination of HIV-1 reservoirs in people living with HIV-1. Functionally, dipeptidyl peptidase that cleaves off N-terminal dipeptides from proteins having a Pro or Ala residue at position 2. Acts as a key inhibitor of caspase-1-dependent monocyte and macrophage pyroptosis in resting cells by preventing activation of NLRP1 and CARD8. Sequesters the cleaved C-terminal part of NLRP1 and CARD8, which respectively constitute the active part of the NLRP1 and CARD8 inflammasomes, in a ternary complex, thereby preventing their oligomerization and activation. The dipeptidyl peptidase activity is required to suppress NLRP1 and CARD8; however, neither NLRP1 nor CARD8 are bona fide substrates of DPP9, suggesting the existence of substrate(s) required for NLRP1 and CARD8 inhibition. This is Dipeptidyl peptidase 9 from Homo sapiens (Human).